The sequence spans 172 residues: CD164 sialomucin-like 2 protein (172 aa).

An N-terminal signal peptide occupies residues 1–29; the sequence is MAAPGPRALRAALCGGCCCLLLCAQLVLA. At 30 to 137 the chain is on the extracellular side; sequence GKGARGFGRG…PEDHSPGFDG (108 aa). N-linked (GlcNAc...) asparagine glycosylation is found at N69 and N101. Positions 108–132 are disordered; that stretch reads ASHHHSTEEPKPSTTGSPPIPEDHS. The chain crosses the membrane as a helical span at residues 138 to 158; it reads ASFIGGIVLVLSLQATAFFVL. The Cytoplasmic segment spans residues 159–172; sequence RFLKAKDSTYQTLI.

It belongs to the CD164 family.

Its subcellular location is the membrane. This Mus musculus (Mouse) protein is CD164 sialomucin-like 2 protein (Cd164l2).